The sequence spans 517 residues: NAD(P)H-quinone oxidoreductase subunit 2 (517 aa).

Transmembrane regions (helical) follow at residues 16–36 (ILPE…DLIF), 43–63 (WLPY…YLAW), 80–100 (LSIV…LMSI), 110–130 (LAEF…LCGA), 133–153 (LVMI…MTGY), 168–188 (LLIG…LYGL), 211–231 (LGLA…ISAV), 245–265 (PTPV…ALAI), 279–299 (WHFV…VVAL), 307–327 (MLAY…VAGT), 335–355 (VFYL…IILF), 379–399 (LALS…GFFG), 401–421 (IYLF…LGLV), and 467–487 (VGIV…NPLF).

Belongs to the complex I subunit 2 family. NDH-1 can be composed of about 15 different subunits; different subcomplexes with different compositions have been identified which probably have different functions.

The protein localises to the cellular thylakoid membrane. The catalysed reaction is a plastoquinone + NADH + (n+1) H(+)(in) = a plastoquinol + NAD(+) + n H(+)(out). It carries out the reaction a plastoquinone + NADPH + (n+1) H(+)(in) = a plastoquinol + NADP(+) + n H(+)(out). Functionally, NDH-1 shuttles electrons from an unknown electron donor, via FMN and iron-sulfur (Fe-S) centers, to quinones in the respiratory and/or the photosynthetic chain. The immediate electron acceptor for the enzyme in this species is believed to be plastoquinone. Couples the redox reaction to proton translocation, and thus conserves the redox energy in a proton gradient. Cyanobacterial NDH-1 also plays a role in inorganic carbon-concentration. In Rippkaea orientalis (strain PCC 8801 / RF-1) (Cyanothece sp. (strain PCC 8801)), this protein is NAD(P)H-quinone oxidoreductase subunit 2.